Consider the following 100-residue polypeptide: Large ribosomal subunit protein uL23 (100 aa).

This sequence belongs to the universal ribosomal protein uL23 family. As to quaternary structure, part of the 50S ribosomal subunit. Contacts protein L29, and trigger factor when it is bound to the ribosome.

In terms of biological role, one of the early assembly proteins it binds 23S rRNA. One of the proteins that surrounds the polypeptide exit tunnel on the outside of the ribosome. Forms the main docking site for trigger factor binding to the ribosome. This chain is Large ribosomal subunit protein uL23, found in Bradyrhizobium diazoefficiens (strain JCM 10833 / BCRC 13528 / IAM 13628 / NBRC 14792 / USDA 110).